A 55-amino-acid polypeptide reads, in one-letter code: MAKEKRETIRLFSSSKNGHFYSTTKNKRTSSEKMTLKKFDPFARKHVIYIESKNS.

This sequence belongs to the bacterial ribosomal protein bL33 family.

The sequence is that of Large ribosomal subunit protein bL33 from Blochmanniella pennsylvanica (strain BPEN).